Here is a 310-residue protein sequence, read N- to C-terminus: Protein N-terminal asparagine amidohydrolase (310 aa).

As to quaternary structure, monomer.

The protein localises to the cytoplasm. The catalysed reaction is N-terminal L-asparaginyl-[protein] + H2O + H(+) = N-terminal L-aspartyl-[protein] + NH4(+). Its function is as follows. N-terminal asparagine deamidase that mediates deamidation of N-terminal asparagine residues to aspartate. Required for the ubiquitin-dependent turnover of intracellular proteins that initiate with Met-Asn. These proteins are acetylated on the retained initiator methionine and can subsequently be modified by the removal of N-acetyl methionine by acylaminoacid hydrolase (AAH). Conversion of the resulting N-terminal asparagine to aspartate by NTAN1/PNAD renders the protein susceptible to arginylation, polyubiquitination and degradation as specified by the N-end rule. This enzyme does not act on substrates with internal or C-terminal asparagines and does not act on glutamine residues in any position. This chain is Protein N-terminal asparagine amidohydrolase, found in Mus musculus (Mouse).